A 417-amino-acid chain; its full sequence is Monooxygenase cfoF (417 aa).

Residues 45 to 48 (DRDK), Arg126, and Asp327 each bind FAD. Residues 389–399 (AHTTQLDRDQF) are compositionally biased toward basic and acidic residues. The interval 389 to 417 (AHTTQLDRDQFTDGSGANDFLVGQQHSDK) is disordered.

It belongs to the aromatic-ring hydroxylase family. KMO subfamily. FAD is required as a cofactor.

Its pathway is secondary metabolite biosynthesis; flavonoid biosynthesis. Its function is as follows. Monooxygenase; part of the gene cluster that mediates the biosynthesis of chlorflavonin, a fungal flavonoid with acetolactate synthase inhibitory activity. Within the pathway, cfoF is responsible for the hydroxylation of the flavonoid skeleton at position C3. The pathway begins with the PKS-NRPS hybrid synthetase cfoA that uses benzoic acid or p-hydroxybenzoic acid as a starter unit with four rounds of chain elongation using malonyl-CoA to form the chalcone skeleton. Then, a new type of chalcone isomerase, cfoK, catalyzes the conversion of the chalcone into a flavanone by a histidine-mediated oxa-Michael addition mechanism. The desaturation of flavanone to flavone is catalyzed by a new type of flavone synthase, the flavin mononucleotide (FMN)-dependent oxidoreductase cfoJ. Monooxygenases cfoF, cfoG, and P450 cfoH are responsible for the hydroxylation of the flavonoid skeleton at sites C3, C8, and C2', respectively. Like cfoF, the dehydratase cfoI plays also a role in the hydroxylation of position C3. Methyltransferases cfoB, cfoC, and cfoD then catalyze the methylation of C7-OH, C8-OH, and C3-OH, respectively. Finally, the monooxygenase cfoE is responsible for the chlorination of flavonoid at position C3'. This chain is Monooxygenase cfoF, found in Aspergillus candidus.